The chain runs to 94 residues: Small ribosomal subunit protein uS19 (94 aa).

Residues 73–94 (EFSPTRRFGGHADKKSKKGQVK) are disordered.

Belongs to the universal ribosomal protein uS19 family.

Protein S19 forms a complex with S13 that binds strongly to the 16S ribosomal RNA. In Kosmotoga olearia (strain ATCC BAA-1733 / DSM 21960 / TBF 19.5.1), this protein is Small ribosomal subunit protein uS19.